The chain runs to 110 residues: Transcription factor S (110 aa).

Cys4, Cys7, Cys22, Cys25, Cys71, Cys74, Cys99, and Cys102 together coordinate Zn(2+). The TFIIS-type zinc finger occupies 67-107 (TKVTCPKCGNDTAYWWEMQTRAGDEPSTIFYKCTKCGYTWR).

Belongs to the archaeal rpoM/eukaryotic RPA12/RPB9/RPC11 RNA polymerase family.

The protein resides in the chromosome. Its function is as follows. Involved in transcriptional proofreading and fidelity. Induces RNA cleavage activity in RNA polymerase (RNAP). Stimulates transcription elongation by RNAP on both naked DNA and histone-bound DNA (chromatin), facilitating transcription through the histone barrier. Stimulation depends on transcript cleavage. In the presence of TFS, the cleavage activity of RNAP truncates RNA back to position +15 in a stepwise manner by releasing mainly dinucleotides from the 3'-end of the nascent RNA. The truncated RNAs are able to continue elongation. Misincorporation of nucleotides during elongation of transcription leads to arrested elongation complexes which are rescued by TFS-promoted removal of a dinucleotide from the 3'-end. TFS is able to induce a cleavage resynthesis cycle in stalled elongation complexes (resulting from the next missing nucleotide or a reduced incorporation rate of a wrong nucleotide) preventing misincorporation and enabling proofreading in a post-incorporation manner. Pausing of elongation complexes is the main determinant of TFS-induced RNA cleavage. The chain is Transcription factor S from Thermococcus kodakarensis (strain ATCC BAA-918 / JCM 12380 / KOD1) (Pyrococcus kodakaraensis (strain KOD1)).